The chain runs to 231 residues: Flagellar L-ring protein (231 aa).

A signal peptide spans 1 to 18; sequence MSRLLIVVSLSSAFALAG. Cys19 carries the N-palmitoyl cysteine lipid modification. Cys19 is lipidated: S-diacylglycerol cysteine.

Belongs to the FlgH family. In terms of assembly, the basal body constitutes a major portion of the flagellar organelle and consists of four rings (L,P,S, and M) mounted on a central rod.

The protein resides in the cell outer membrane. Its subcellular location is the bacterial flagellum basal body. Its function is as follows. Assembles around the rod to form the L-ring and probably protects the motor/basal body from shearing forces during rotation. The protein is Flagellar L-ring protein of Stutzerimonas stutzeri (strain A1501) (Pseudomonas stutzeri).